The chain runs to 316 residues: C1GALT1-specific chaperone 1 (316 aa).

The Cytoplasmic segment spans residues 1–6 (MLSESS). The helical; Signal-anchor for type II membrane protein transmembrane segment at 7–26 (SFLKGVMLGSIFCALITMLG) threads the bilayer. Topologically, residues 27-316 (HIRIGNRMHH…FLPPNGSEND (290 aa)) are lumenal.

It belongs to the glycosyltransferase 31 family. Beta3-Gal-T subfamily. In terms of assembly, associates with core 1 beta-3-galactosyltransferase (C1GALT1), probably not with the soluble active form.

It localises to the membrane. Its function is as follows. Probable chaperone required for the generation of 1 O-glycan Gal-beta1-3GalNAc-alpha1-Ser/Thr (T antigen), which is a precursor for many extended O-glycans in glycoproteins. Probably acts as a specific molecular chaperone assisting the folding/stability of core 1 beta-3-galactosyltransferase (C1GALT1). In Rattus norvegicus (Rat), this protein is C1GALT1-specific chaperone 1 (C1galt1c1).